Consider the following 724-residue polypeptide: Acyl-coenzyme A oxidase 2 (724 aa).

The segment at 1–48 is disordered; it reads MAMLSQPNDGHDHPEKKDPDTTPKQVAGVISSQDPPHPAKDVAEERAR. Basic and acidic residues-rich tracts occupy residues 9 to 21 and 37 to 48; these read DGHD…DPDT and HPAKDVAEERAR.

It belongs to the acyl-CoA oxidase family. FAD serves as cofactor.

Its subcellular location is the peroxisome. It carries out the reaction a 2,3-saturated acyl-CoA + O2 = a (2E)-enoyl-CoA + H2O2. It participates in lipid metabolism; peroxisomal fatty acid beta-oxidation. This is Acyl-coenzyme A oxidase 2 (POX2) from Candida tropicalis (Yeast).